Here is a 291-residue protein sequence, read N- to C-terminus: UPF0173 metal-dependent hydrolase Rmet_5695 (291 aa).

Belongs to the UPF0173 family.

This chain is UPF0173 metal-dependent hydrolase Rmet_5695, found in Cupriavidus metallidurans (strain ATCC 43123 / DSM 2839 / NBRC 102507 / CH34) (Ralstonia metallidurans).